The chain runs to 1374 residues: Alpha,alpha-trehalose-phosphate synthase [UDP-forming] 1 (1374 aa).

3 disordered regions span residues 28–66 (DTGK…SDKD), 86–117 (YTPG…DDEG), and 1352–1374 (KADS…SKQQ). Composition is skewed to basic and acidic residues over residues 56 to 66 (DPFDRPKSDKD) and 86 to 95 (YTPGKEKGVD). Composition is skewed to acidic residues over residues 96–109 (QDES…EDHD) and 1356–1368 (YYDD…DQED).

This sequence in the N-terminal section; belongs to the glycosyltransferase 20 family. The protein in the C-terminal section; belongs to the gob-1 trehalose phosphatase family.

It catalyses the reaction D-glucose 6-phosphate + UDP-alpha-D-glucose = alpha,alpha-trehalose 6-phosphate + UDP + H(+). Catalyzes the production of trehalose from glucose-6-phosphate and UDP-alpha-D-glucose in a 2 step process. In Caenorhabditis briggsae, this protein is Alpha,alpha-trehalose-phosphate synthase [UDP-forming] 1 (tps-1).